The following is an 86-amino-acid chain: Neurotoxin-like protein pMD18-NTL3 (86 aa).

The first 21 residues, 1–21 (MKTLLLTLVVLTIACLDLGYT), serve as a signal peptide directing secretion. 4 disulfides stabilise this stretch: cysteine 24/cysteine 45, cysteine 38/cysteine 62, cysteine 66/cysteine 78, and cysteine 79/cysteine 84.

It belongs to the three-finger toxin family. Short-chain subfamily. Orphan group IX sub-subfamily. As to expression, expressed by the venom gland.

The protein localises to the secreted. The protein is Neurotoxin-like protein pMD18-NTL3 of Bungarus multicinctus (Many-banded krait).